We begin with the raw amino-acid sequence, 2241 residues long: Large tegument protein deneddylase (2241 aa).

A deubiquitination activity region spans residues 1-238 (MKVTQASCHQ…IDLTGVVRES (238 aa)). The 223-residue stretch at 4–226 (TQASCHQGDI…AARLVSTYRD (223 aa)) folds into the Peptidase C76 domain. Active-site residues include cysteine 24, aspartate 160, and histidine 162. The interval 239-314 (ADTAATTTTA…STTSKTLATA (76 aa)) is disordered. Residues 240-250 (DTAATTTTAAP) are compositionally biased toward low complexity. The span at 251–268 (SLPPLPDPIVDPGCPPGV) shows a compositional bias: pro residues. Positions 304 to 314 (PSTTSKTLATA) are enriched in low complexity. The interaction with inner tegument protein stretch occupies residues 327–331 (SSAVP). Disordered regions lie at residues 1187-1230 (MTET…PPAD) and 2118-2152 (PIAR…DTSR). 2 stretches are compositionally biased toward basic and acidic residues: residues 1190-1199 (TSERLDRSLR) and 2142-2152 (QIDHAQDDTSR).

It belongs to the herpesviridae large tegument protein family. As to quaternary structure, interacts with host CUL1 and CUL4A; these interactions inhibit the E3 ligase activity of cullins. Interacts with inner tegument protein. Interacts with capsid vertex specific component CVC2. Interacts with the major capsid protein/MCP.

It is found in the virion tegument. Its subcellular location is the host cytoplasm. The protein localises to the host nucleus. It carries out the reaction Thiol-dependent hydrolysis of ester, thioester, amide, peptide and isopeptide bonds formed by the C-terminal Gly of ubiquitin (a 76-residue protein attached to proteins as an intracellular targeting signal).. In terms of biological role, large tegument protein that plays multiple roles in the viral cycle. During viral entry, remains associated with the capsid while most of the tegument is detached and participates in the capsid transport toward the host nucleus. Plays a role in the routing of the capsid at the nuclear pore complex and subsequent uncoating. Within the host nucleus, acts as a deneddylase and promotes the degradation of nuclear CRLs (cullin-RING ubiquitin ligases) and thereby stabilizes nuclear CRL substrates, while cytoplasmic CRLs remain unaffected. These modifications prevent host cell cycle S-phase progression and create a favorable environment allowing efficient viral genome replication. Participates later in the secondary envelopment of capsids. Indeed, plays a linker role for the association of the outer viral tegument to the capsids together with the inner tegument protein. In Homo sapiens (Human), this protein is Large tegument protein deneddylase (UL48).